The following is a 136-amino-acid chain: Nuclear receptor 2C2-associated protein (136 aa).

The protein belongs to the NR2C2AP family.

It localises to the nucleus. In terms of biological role, may act as a repressor of nr2c2-mediated transactivation by suppressing the binding between nr2c2 and its response element in target genes. This Xenopus tropicalis (Western clawed frog) protein is Nuclear receptor 2C2-associated protein (nr2c2ap).